The following is a 612-amino-acid chain: MNSLVRRSAQQLSLWRTYCIKHNASEAASPGRNAGRPNYEEFIGRHQRQAQCSIVVQVSSEKSYEELYNYCSSFGSIMGAHHYCVRQDETLHYILLEYATSDEAAAAIGAGVTNGELSGVPVRSPFLWFRAAGGGRRSPKLVANTAPALLSLDGTRQVDQRHLLGLLRGAADIEEQVQQLYEHTRLNELGIRMRFLAALQVQQAIAGMFPAAQAQPFGSSVNGFGRMGCDLDLILRFDSDMGAKIPLEAAVPSRLVYHTKENLSNGRSQTQRHMECFGDMLHLFLPGVCHVRRILQARVPIIKYHHEHLDLEVDLSMSNLTGFYMSELLYMFGEMDPRVRPLTFTIRRWAQTCGLTNPSPGRWISNFSLTCLVMFFLQQLRQPILPTIGALAKAAEPGDSRVTEDGINCTFTRNVDRLGFRSRNQSSLSELLLQFFEFYSQFDFHNRAISLNEGKPLSKPDHSAMYIVNPLEQLLNVSKNVSLEECERLRIEVRNAAWVLESEVENASVPEGDGQELSCGLLNLFKHPEKAVIRPNMFFKPRMVEVSDLFEQKEAGATSSSTPPTPAITYKSASVRQQVQSIKAATRSELKQLRGSGSSVPTSSPNNRRRSR.

The transit peptide at 1-57 directs the protein to the mitochondrion; the sequence is MNSLVRRSAQQLSLWRTYCIKHNASEAASPGRNAGRPNYEEFIGRHQRQAQCSIVVQ. ATP-binding positions include 83 to 89 and 228 to 229; these read YCVRQDE and GC. Residues Asp230 and Asp232 each contribute to the Mg(2+) site. One can recognise a PAP-associated domain in the interval 427–463; the sequence is SLSELLLQFFEFYSQFDFHNRAISLNEGKPLSKPDHS. Disordered stretches follow at residues 555–574 and 588–612; these read AGATSSSTPPTPAITYKSAS and SELKQLRGSGSSVPTSSPNNRRRSR.

The protein belongs to the DNA polymerase type-B-like family. The cofactor is Mg(2+). Mn(2+) is required as a cofactor.

The protein localises to the mitochondrion. It catalyses the reaction RNA(n) + ATP = RNA(n)-3'-adenine ribonucleotide + diphosphate. Its function is as follows. Polymerase that creates the 3' poly(A) tail of mitochondrial transcripts. This is not required for transcript stability or translation but may maintain mRNA integrity by protecting 3' termini from degradation. In Drosophila melanogaster (Fruit fly), this protein is Poly(A) RNA polymerase, mitochondrial.